Consider the following 233-residue polypeptide: 7-cyano-7-deazaguanine synthase (233 aa).

L13–M23 serves as a coordination point for ATP. C197, C207, C210, and C213 together coordinate Zn(2+).

Belongs to the QueC family. Zn(2+) serves as cofactor.

It catalyses the reaction 7-carboxy-7-deazaguanine + NH4(+) + ATP = 7-cyano-7-deazaguanine + ADP + phosphate + H2O + H(+). The protein operates within purine metabolism; 7-cyano-7-deazaguanine biosynthesis. In terms of biological role, catalyzes the ATP-dependent conversion of 7-carboxy-7-deazaguanine (CDG) to 7-cyano-7-deazaguanine (preQ(0)). This Desulfatibacillum aliphaticivorans protein is 7-cyano-7-deazaguanine synthase.